We begin with the raw amino-acid sequence, 473 residues long: Serine palmitoyltransferase 1 (473 aa).

Topologically, residues 1 to 15 are lumenal; it reads MATVAEQWVLVEMVQ. An interaction with SPTLC2 region spans residues 1 to 66; sequence MATVAEQWVL…KEELIEEWQP (66 aa). A helical transmembrane segment spans residues 16-36; that stretch reads ALYEAPAYHLILEGILILWII. At 37 to 473 the chain is on the cytoplasmic side; that stretch reads RLVFSKTYKL…IREAAQAVLL (437 aa). Tyr-164 is modified (phosphotyrosine; by ABL).

It belongs to the class-II pyridoxal-phosphate-dependent aminotransferase family. As to quaternary structure, component of the serine palmitoyltransferase (SPT) complex, which is also composed of SPTLC2 or SPTLC3 and SPTSSA or SPTSSB. The heterodimer with SPTLC2 or SPTLC3 forms the catalytic core of the enzyme, while SPTSSA or SPTSSB subunits determine substrate specificity. SPT also interacts with ORMDL proteins, especially ORMDL3, which negatively regulate SPT activity in the presence of ceramides. Forms dimers of heterodimers with SPTLC2. Interacts with RTN4 (isoform B). Pyridoxal 5'-phosphate serves as cofactor. In terms of processing, phosphorylation at Tyr-164 inhibits activity and promotes cell survival. As to expression, expressed in astrocytes.

It localises to the endoplasmic reticulum membrane. It carries out the reaction L-serine + hexadecanoyl-CoA + H(+) = 3-oxosphinganine + CO2 + CoA. The enzyme catalyses octadecanoyl-CoA + L-serine + H(+) = 3-oxoeicosasphinganine + CO2 + CoA. The catalysed reaction is tetradecanoyl-CoA + L-serine + H(+) = 3-oxohexadecasphinganine + CO2 + CoA. It catalyses the reaction dodecanoyl-CoA + L-serine + H(+) = 3-oxotetradecasphinganine + CO2 + CoA. It functions in the pathway lipid metabolism; sphingolipid metabolism. Its activity is regulated as follows. SPT complex catalytic activity is negatively regulated by ORMDL proteins, including ORMDL3, in the presence of ceramides. This mechanism allows to maintain ceramide levels at sufficient concentrations for the production of complex sphingolipids, but which prevents the accumulation of ceramides to levels that trigger apoptosis. Component of the serine palmitoyltransferase multisubunit enzyme (SPT) that catalyzes the initial and rate-limiting step in sphingolipid biosynthesis by condensing L-serine and activated acyl-CoA (most commonly palmitoyl-CoA) to form long-chain bases. The SPT complex is also composed of SPTLC2 or SPTLC3 and SPTSSA or SPTSSB. Within this complex, the heterodimer with SPTLC2 or SPTLC3 forms the catalytic core. The composition of the serine palmitoyltransferase (SPT) complex determines the substrate preference. The SPTLC1-SPTLC2-SPTSSA complex shows a strong preference for C16-CoA substrate, while the SPTLC1-SPTLC3-SPTSSA isozyme uses both C14-CoA and C16-CoA as substrates, with a slight preference for C14-CoA. The SPTLC1-SPTLC2-SPTSSB complex shows a strong preference for C18-CoA substrate, while the SPTLC1-SPTLC3-SPTSSB isozyme displays an ability to use a broader range of acyl-CoAs, without apparent preference. Required for adipocyte cell viability and metabolic homeostasis. In Rattus norvegicus (Rat), this protein is Serine palmitoyltransferase 1.